An 83-amino-acid chain; its full sequence is MESLGIGFSNLVNSNRIIAIVSPETNPIKRIVQKAKEDNNLIDVTFGRKTRSVIIMDSSHVVLSCLQPETLQMRLDKSNNKED.

The protein belongs to the RemA family.

In Finegoldia magna (strain ATCC 29328 / DSM 20472 / WAL 2508) (Peptostreptococcus magnus), this protein is Putative regulatory protein FMG_0656.